The primary structure comprises 845 residues: MGFDIDSQKICSDLESSDRRLKTTVLDELLDKCKEATNSESADKIADVFDKLYLHLLKCYEDRFESVRSKAIQVVSAFLSSLPPTDFHLMNVVSTLAERMGKAETVEPSEEIRLLYIAQLNLMICLYEKMENVGVFRECYPLVVKILIKSIKDDYPVVQREGCSAVVTLSRLADTQEFRPFTESILLPLYTMLNHKHAQARISAIQAIARLSLHMDASGDAMRRLFNEVSPLLMDTMPLVRREVGQMGILMLMELLDRYSFFERILPLVLCCLKDESPEVLNHIYPQWLKCGIQYFNENEAELSQQEISDLPVENYPKDVKRPTIGCRGLVQRSLRLLQLITRETSDWKDNVRLHALKLLYQFVLHAEAAMTAKFFEIYGDLAHACIDHVAEVNAEAAKVADLMGRLLSYDAWIDHGFDGLERNARESYMRCFYHMFTASLGGTYEQLMRLAKLLRCTDYSHTLKPGFQHYILKLLNTIVDKTLKINAGQNELEDLYESVYVCAIKVMALSSSLENVGDEDVNFGQTLIEKMVKLLNTSVPKIHERWFHLALQDVINLDAALEDNAEPVMLLNGLINMCHIRATYVHDLIEKVKIVFQHCCDSAQVKIFSSLSLATLFWSKTMNVERESSTQMLSEFVSQIVEPYLTWKAGSNAEAMRSLAMATLCALAQGAESESVEVLPSLAKYMPSLLEDRNVTTRHYAIKAVVYFREMSVEDLKPLAYATMQRMDDPSAGIRILAALAMGKLKPKFAETDTEENYEKEVWDAIVKRAMDLLLLYHESPEKDMRAAVAVTLKVLAKSHPEAWEERYQRALPMAQKKDLLTELYDKLTINEDSHTEVTSASQD.

8 HEAT repeats span residues D47–P84, E138–T175, P180–A217, S260–N297, Q332–A369, N523–A561, S674–E715, and A766–E803.

Belongs to the DNAAF5 family. Expressed in testis.

It localises to the cytoplasm. The protein localises to the dynein axonemal particle. Cytoplasmic protein involved in the delivery of the dynein machinery to the motile cilium. It is required for the assembly of the axonemal dynein inner and outer arms, two structures attached to the peripheral outer doublet A microtubule of the axoneme, that play a crucial role in cilium motility. The polypeptide is Dynein axonemal assembly factor 5 (Drosophila melanogaster (Fruit fly)).